Here is a 212-residue protein sequence, read N- to C-terminus: Sentrin-specific protease 8 (212 aa).

An N-acetylmethionine modification is found at methionine 1. Residues serine 11 to leucine 174 form a protease region. Active-site residues include histidine 102 and aspartate 119. Cysteine 163 acts as the Nucleophile in catalysis.

The protein belongs to the peptidase C48 family. Broadly expressed, with highest levels in kidney and pancreas.

In terms of biological role, protease that catalyzes two essential functions in the NEDD8 pathway: processing of full-length NEDD8 to its mature form and deconjugation of NEDD8 from targeted proteins such as cullins or p53. The polypeptide is Sentrin-specific protease 8 (SENP8) (Homo sapiens (Human)).